Consider the following 310-residue polypeptide: Ribosomal RNA small subunit methyltransferase H (310 aa).

Residues alanine 33–histidine 35, aspartate 53, phenylalanine 79, aspartate 100, and glutamine 107 each bind S-adenosyl-L-methionine.

Belongs to the methyltransferase superfamily. RsmH family.

It localises to the cytoplasm. It carries out the reaction cytidine(1402) in 16S rRNA + S-adenosyl-L-methionine = N(4)-methylcytidine(1402) in 16S rRNA + S-adenosyl-L-homocysteine + H(+). Its function is as follows. Specifically methylates the N4 position of cytidine in position 1402 (C1402) of 16S rRNA. The chain is Ribosomal RNA small subunit methyltransferase H from Clostridium perfringens (strain 13 / Type A).